Consider the following 429-residue polypeptide: UDP-N-acetylglucosamine 1-carboxyvinyltransferase (429 aa).

22-23 (KN) serves as a coordination point for phosphoenolpyruvate. Arg-102 provides a ligand contact to UDP-N-acetyl-alpha-D-glucosamine. Cys-126 serves as the catalytic Proton donor. A 2-(S-cysteinyl)pyruvic acid O-phosphothioketal modification is found at Cys-126. UDP-N-acetyl-alpha-D-glucosamine-binding positions include 131 to 135 (RPVDL), Asp-316, and Ile-338.

This sequence belongs to the EPSP synthase family. MurA subfamily.

It is found in the cytoplasm. The enzyme catalyses phosphoenolpyruvate + UDP-N-acetyl-alpha-D-glucosamine = UDP-N-acetyl-3-O-(1-carboxyvinyl)-alpha-D-glucosamine + phosphate. It functions in the pathway cell wall biogenesis; peptidoglycan biosynthesis. Cell wall formation. Adds enolpyruvyl to UDP-N-acetylglucosamine. The sequence is that of UDP-N-acetylglucosamine 1-carboxyvinyltransferase from Methylocella silvestris (strain DSM 15510 / CIP 108128 / LMG 27833 / NCIMB 13906 / BL2).